Consider the following 249-residue polypeptide: General transcription factor IIF subunit 2 (249 aa).

Alanine 2 bears the N-acetylalanine mark. N6-acetyllysine is present on residues lysine 22, lysine 33, and lysine 137. Serine 142 is modified (phosphoserine). Glycine 227 and histidine 229 together coordinate DNA. A Phosphoserine modification is found at serine 248.

This sequence belongs to the TFIIF beta subunit family. Heterodimer of an alpha and a beta subunit. Interacts with HTATSF1 and GPBP1. Interacts with URI1. Interacts with GTF2B (via N-terminus); this interaction is inhibited in presence of GTF2F1. Part of TBP-based Pol II pre-initiation complex (PIC), in which Pol II core assembles with general transcription factors and other specific initiation factors including GTF2E1, GTF2E2, GTF2F1, GTF2F2, TCEA1, ERCC2, ERCC3, GTF2H2, GTF2H3, GTF2H4, GTF2H5, GTF2A1, GTF2A2, GTF2B and TBP; this large multi-subunit PIC complex mediates DNA unwinding and targets Pol II core to the transcription start site where the first phosphodiester bond forms.

The protein localises to the nucleus. Functionally, TFIIF is a general transcription initiation factor that binds to RNA polymerase II and helps to recruit it to the initiation complex in collaboration with TFIIB. This is General transcription factor IIF subunit 2 (GTF2F2) from Bos taurus (Bovine).